The chain runs to 284 residues: Pantothenate synthetase (284 aa).

34–41 (MGALHAGH) contributes to the ATP binding site. Catalysis depends on H41, which acts as the Proton donor. Q65 is a (R)-pantoate binding site. Q65 provides a ligand contact to beta-alanine. Position 151-154 (151-154 (GEKD)) interacts with ATP. Q157 contributes to the (R)-pantoate binding site. ATP is bound by residues L180 and 188–191 (MSSR).

It belongs to the pantothenate synthetase family. As to quaternary structure, homodimer.

Its subcellular location is the cytoplasm. It catalyses the reaction (R)-pantoate + beta-alanine + ATP = (R)-pantothenate + AMP + diphosphate + H(+). It participates in cofactor biosynthesis; (R)-pantothenate biosynthesis; (R)-pantothenate from (R)-pantoate and beta-alanine: step 1/1. Catalyzes the condensation of pantoate with beta-alanine in an ATP-dependent reaction via a pantoyl-adenylate intermediate. The protein is Pantothenate synthetase of Paramagnetospirillum magneticum (strain ATCC 700264 / AMB-1) (Magnetospirillum magneticum).